Here is a 342-residue protein sequence, read N- to C-terminus: Anthranilate phosphoribosyltransferase (342 aa).

5-phospho-alpha-D-ribose 1-diphosphate contacts are provided by residues Gly-81, 84 to 85, Thr-89, 91 to 94, 109 to 117, and Ala-121; these read GD, NVST, and KHGNRAASS. Position 81 (Gly-81) interacts with anthranilate. Ser-93 is a binding site for Mg(2+). Anthranilate is bound at residue Asn-112. Position 167 (Arg-167) interacts with anthranilate. Residues Asp-226 and Glu-227 each contribute to the Mg(2+) site.

This sequence belongs to the anthranilate phosphoribosyltransferase family. As to quaternary structure, homodimer. Requires Mg(2+) as cofactor.

It carries out the reaction N-(5-phospho-beta-D-ribosyl)anthranilate + diphosphate = 5-phospho-alpha-D-ribose 1-diphosphate + anthranilate. Its pathway is amino-acid biosynthesis; L-tryptophan biosynthesis; L-tryptophan from chorismate: step 2/5. In terms of biological role, catalyzes the transfer of the phosphoribosyl group of 5-phosphorylribose-1-pyrophosphate (PRPP) to anthranilate to yield N-(5'-phosphoribosyl)-anthranilate (PRA). The polypeptide is Anthranilate phosphoribosyltransferase (Beijerinckia indica subsp. indica (strain ATCC 9039 / DSM 1715 / NCIMB 8712)).